Reading from the N-terminus, the 390-residue chain is Lipid-A-disaccharide synthase (390 aa).

Belongs to the LpxB family.

It carries out the reaction a lipid X + a UDP-2-N,3-O-bis[(3R)-3-hydroxyacyl]-alpha-D-glucosamine = a lipid A disaccharide + UDP + H(+). The protein operates within bacterial outer membrane biogenesis; LPS lipid A biosynthesis. Condensation of UDP-2,3-diacylglucosamine and 2,3-diacylglucosamine-1-phosphate to form lipid A disaccharide, a precursor of lipid A, a phosphorylated glycolipid that anchors the lipopolysaccharide to the outer membrane of the cell. In Neisseria gonorrhoeae (strain ATCC 700825 / FA 1090), this protein is Lipid-A-disaccharide synthase.